We begin with the raw amino-acid sequence, 217 residues long: MTDNNEFDVADLRREYIRGGLRRSDLTENPLELFERWLKQACDARLPDPTAMCVATVDANGQPYQRIVLLKHYDDQGLVFYTNLGSRKAQQLAQNPHISLLFPWHMLDRQVIFLGTTERLSTLEVLKYFSSRPKDSQIGAWVSQQSSRISARGVLESKFLELKQKFQQGEVPLPSFWGGFRVKFDSVEFWQGGEHRLHDRFIYQRNADTWKIDRLAP.

Residues 13 to 16 (RREY) and lysine 71 contribute to the substrate site. FMN is bound by residues 66 to 71 (RIVLLK), 81 to 82 (YT), arginine 87, lysine 88, and glutamine 110. Substrate-binding residues include tyrosine 128, arginine 132, and serine 136. Residues 145–146 (QS) and tryptophan 190 contribute to the FMN site. 196-198 (RLH) contributes to the substrate binding site. Arginine 200 lines the FMN pocket.

Belongs to the pyridoxamine 5'-phosphate oxidase family. As to quaternary structure, homodimer. Requires FMN as cofactor.

It carries out the reaction pyridoxamine 5'-phosphate + O2 + H2O = pyridoxal 5'-phosphate + H2O2 + NH4(+). The catalysed reaction is pyridoxine 5'-phosphate + O2 = pyridoxal 5'-phosphate + H2O2. It participates in cofactor metabolism; pyridoxal 5'-phosphate salvage; pyridoxal 5'-phosphate from pyridoxamine 5'-phosphate: step 1/1. It functions in the pathway cofactor metabolism; pyridoxal 5'-phosphate salvage; pyridoxal 5'-phosphate from pyridoxine 5'-phosphate: step 1/1. In terms of biological role, catalyzes the oxidation of either pyridoxine 5'-phosphate (PNP) or pyridoxamine 5'-phosphate (PMP) into pyridoxal 5'-phosphate (PLP). The chain is Pyridoxine/pyridoxamine 5'-phosphate oxidase from Yersinia enterocolitica serotype O:8 / biotype 1B (strain NCTC 13174 / 8081).